The chain runs to 1107 residues: Voltage-gated delayed rectifier potassium channel KCNH8 (1107 aa).

Over 1–225 (MPVMKGLLAP…HFSTFKAGWD (225 aa)) the chain is Cytoplasmic. The region spanning 18–90 (IATRFDGTHS…LQIEKSLEEK (73 aa)) is the PAS domain. Positions 93–145 (FKGEIMFYKKNGSPFWCLLDIVPIKNEKGDVVLFLASFKDITDTKVKITPEDK) constitute a PAC domain. Residues 226–246 (WLILLATFYVAVTVPYNVCFI) traverse the membrane as a helical segment. The Extracellular segment spans residues 247-255 (GNDDLSTTR). The chain crosses the membrane as a helical span at residues 256-276 (STTVSDIAVEILFIIDIILNF). Topologically, residues 277 to 298 (RTTYVSKSGQVIFEARSICIHY) are cytoplasmic. The chain crosses the membrane as a helical span at residues 299–319 (VTTWFIIDLIAALPFDLLYAF). N320 is a glycosylation site (N-linked (GlcNAc...) asparagine). Residues 320 to 327 (NVTVVSLV) are Extracellular-facing. Residues 328–348 (HLLKTVRLLRLLRLLQKLDRY) traverse the membrane as a helical; Voltage-sensor segment. The Cytoplasmic portion of the chain corresponds to 349–357 (SQHSTIVLT). The helical transmembrane segment at 358-378 (LLMSMFALLAHWMACIWYVIG) threads the bilayer. Over 379–419 (KMEREDNSLLKWEVGWLHELGKRLESPYYGNNTLGGPSIRS) the chain is Extracellular. N409 carries N-linked (GlcNAc...) asparagine glycosylation. An intramembrane region (pore-forming) is located at residues 420-440 (AYIAALYFTLSSLTSVGFGNV). The Selectivity filter signature appears at 434–439 (SVGFGN). The Extracellular segment spans residues 441-448 (SANTDAEK). The helical transmembrane segment at 449–469 (IFSICTMLIGALMHALVFGNV) threads the bilayer. Residues 470 to 1107 (TAIIQRMYSR…EVKDNKAINV (638 aa)) lie on the Cytoplasmic side of the membrane. Residues 551-668 (LFECASRGCL…HKFVEDIQHD (118 aa)) are cNMP-binding domain. Residues 686–702 (SNKSMVSQSEPKGNGNI) show a composition bias toward polar residues. 4 disordered regions span residues 686–742 (SNKS…NKKV), 764–791 (HSPI…KRKE), 818–847 (EDGN…PPLG), and 961–989 (VDPS…YHSP). Positions 710–724 (VEDEEEEEEGEEEEA) are enriched in acidic residues. The segment covering 961–972 (VDPSSVGSSPQR) has biased composition (polar residues).

The protein belongs to the potassium channel family. H (Eag) (TC 1.A.1.20) subfamily. Kv12.1/KCNH8 sub-subfamily. In terms of assembly, the potassium channel is probably composed of a homo- or heterotetrameric complex of pore-forming alpha subunits that can associate with modulating beta subunits. As to expression, primarily expressed in the nervous system.

The protein resides in the membrane. It carries out the reaction K(+)(in) = K(+)(out). Functionally, pore-forming (alpha) subunit of a voltage-gated delayed rectifier potassium channel that mediates outward-rectifying potassium currents. Elicits a slowly activating, non-inactivating and slowly deactivation outwards potassium current at depolarizating voltages from -30 mV to +50mV. Shows no obvious change in the activation rate from different holding potentials. Activation is strongly dependent on the pH of the external solution. The polypeptide is Voltage-gated delayed rectifier potassium channel KCNH8 (Homo sapiens (Human)).